Here is a 120-residue protein sequence, read N- to C-terminus: Large ribosomal subunit protein bL21 (120 aa).

This sequence belongs to the bacterial ribosomal protein bL21 family. Part of the 50S ribosomal subunit. Contacts protein L20.

This protein binds to 23S rRNA in the presence of protein L20. In Roseiflexus sp. (strain RS-1), this protein is Large ribosomal subunit protein bL21.